Reading from the N-terminus, the 352-residue chain is S-adenosylmethionine:tRNA ribosyltransferase-isomerase (352 aa).

It belongs to the QueA family. As to quaternary structure, monomer.

It localises to the cytoplasm. The catalysed reaction is 7-aminomethyl-7-carbaguanosine(34) in tRNA + S-adenosyl-L-methionine = epoxyqueuosine(34) in tRNA + adenine + L-methionine + 2 H(+). The protein operates within tRNA modification; tRNA-queuosine biosynthesis. In terms of biological role, transfers and isomerizes the ribose moiety from AdoMet to the 7-aminomethyl group of 7-deazaguanine (preQ1-tRNA) to give epoxyqueuosine (oQ-tRNA). The protein is S-adenosylmethionine:tRNA ribosyltransferase-isomerase of Vibrio cholerae serotype O1 (strain ATCC 39541 / Classical Ogawa 395 / O395).